The primary structure comprises 2729 residues: Protein NO VEIN (2729 aa).

The disordered stretch occupies residues 1–27 (MQGNHDGSWSLHPSTNNGSGRANGNIN). Short sequence motifs (nuclear localization signal) lie at residues 194–201 (KRKVDVLR) and 473–480 (MKRLGGSN). Disordered regions lie at residues 477-517 (GGSN…IPKL) and 2482-2515 (LPSSSKTRHGSSKTNTDDSKQELDTSSSKEDVTE). Composition is skewed to basic and acidic residues over residues 488–497 (RNHEKSDSSK) and 2496–2515 (NTDDSKQELDTSSSKEDVTE).

Specifically expressed in developing embryos, leaf primordia, and shoot and root apical meristems.

It localises to the nucleus. Essential protein required for cell fate determination during embryogenesis. Mediates auxin-dependent coordinated cell-fate specification and patterning in embryos (e.g. cotyledon outgrowth and separation), shoots and roots (e.g. leaf vascular development, cellular patterning and stem cell maintenance in the meristems). Required for provascular PIN1 expression and region-specific expression of PIN7 in leaf primordia, cell type-specific expression of PIN3, PIN4, and PIN7 in the root, and PIN2 polarity in the root cortex. The chain is Protein NO VEIN from Arabidopsis thaliana (Mouse-ear cress).